Reading from the N-terminus, the 195-residue chain is Inner membrane-spanning protein YciB (195 aa).

The next 5 helical transmembrane spans lie at 34–54 (IYGA…ALWL), 65–85 (FTLG…EDTF), 88–108 (WKAP…HFIG), 131–151 (LNIA…YVVF), and 160–180 (FKVF…GLFL).

It belongs to the YciB family.

The protein resides in the cell inner membrane. In terms of biological role, plays a role in cell envelope biogenesis, maintenance of cell envelope integrity and membrane homeostasis. The sequence is that of Inner membrane-spanning protein YciB from Pseudomonas aeruginosa (strain LESB58).